A 166-amino-acid chain; its full sequence is Regulatory protein RecX (166 aa).

This sequence belongs to the RecX family.

The protein localises to the cytoplasm. Its function is as follows. Modulates RecA activity. This is Regulatory protein RecX from Salmonella arizonae (strain ATCC BAA-731 / CDC346-86 / RSK2980).